The sequence spans 194 residues: Imidazoleglycerol-phosphate dehydratase (194 aa).

It belongs to the imidazoleglycerol-phosphate dehydratase family.

Its subcellular location is the cytoplasm. The catalysed reaction is D-erythro-1-(imidazol-4-yl)glycerol 3-phosphate = 3-(imidazol-4-yl)-2-oxopropyl phosphate + H2O. Its pathway is amino-acid biosynthesis; L-histidine biosynthesis; L-histidine from 5-phospho-alpha-D-ribose 1-diphosphate: step 6/9. The chain is Imidazoleglycerol-phosphate dehydratase from Caldanaerobacter subterraneus subsp. tengcongensis (strain DSM 15242 / JCM 11007 / NBRC 100824 / MB4) (Thermoanaerobacter tengcongensis).